Reading from the N-terminus, the 287-residue chain is Troponin T, cardiac muscle (287 aa).

2 stretches are compositionally biased toward acidic residues: residues 1-31 and 44-59; these read MSDV…EEAG and EDGE…DGPV. 2 disordered regions span residues 1-85 and 124-208; these read MSDV…GERV and KDRI…EKKK. Position 2 is an N-acetylserine (Ser2). Phosphoserine; by CK2 is present on Ser2. Over residues 66–79 the composition is skewed to pro residues; the sequence is APGPFMPNLVPPKI. Basic and acidic residues-rich tracts occupy residues 124–173 and 192–208; these read KDRI…DEAR and QAER…EKKK. Ser197 carries the phosphoserine; by PKC/PRKCA modification. The residue at position 202 (Thr202) is a Phosphothreonine; by PKC/PRKCA and RAF1. Thr283 is modified (phosphothreonine; by PKC/PRKCA).

It belongs to the troponin T family. Phosphorylation at Thr-202 by PRKCA induces significant reduction in myofilament calcium sensitivity and actomyosin ATPase activity.

Troponin T is the tropomyosin-binding subunit of troponin, the thin filament regulatory complex which confers calcium-sensitivity to striated muscle actomyosin ATPase activity. This Ovis aries (Sheep) protein is Troponin T, cardiac muscle (TNNT2).